A 97-amino-acid chain; its full sequence is Large ribosomal subunit protein eL21 (97 aa).

Over residues 1-12 (MPSSNGPRQATR) the composition is skewed to polar residues. The segment at 1-35 (MPSSNGPRQATRNKLKNDARERGTSPPQRSIEEYD) is disordered.

This sequence belongs to the eukaryotic ribosomal protein eL21 family.

This is Large ribosomal subunit protein eL21 from Natronomonas pharaonis (strain ATCC 35678 / DSM 2160 / CIP 103997 / JCM 8858 / NBRC 14720 / NCIMB 2260 / Gabara) (Halobacterium pharaonis).